The primary structure comprises 449 residues: 23S rRNA (uracil(1939)-C(5))-methyltransferase RlmD (449 aa).

Positions 1–66 constitute a TRAM domain; that stretch reads MGRSRHHNKL…AKFDEAKVVE (66 aa). Positions 79, 85, 88, and 169 each coordinate [4Fe-4S] cluster. S-adenosyl-L-methionine contacts are provided by glutamine 280, phenylalanine 309, asparagine 314, glutamate 330, asparagine 357, and aspartate 379. Cysteine 405 acts as the Nucleophile in catalysis.

This sequence belongs to the class I-like SAM-binding methyltransferase superfamily. RNA M5U methyltransferase family. RlmD subfamily.

The enzyme catalyses uridine(1939) in 23S rRNA + S-adenosyl-L-methionine = 5-methyluridine(1939) in 23S rRNA + S-adenosyl-L-homocysteine + H(+). Functionally, catalyzes the formation of 5-methyl-uridine at position 1939 (m5U1939) in 23S rRNA. The polypeptide is 23S rRNA (uracil(1939)-C(5))-methyltransferase RlmD (Francisella tularensis subsp. tularensis (strain FSC 198)).